A 248-amino-acid chain; its full sequence is Carboxy-S-adenosyl-L-methionine synthase (248 aa).

S-adenosyl-L-methionine is bound by residues Y40, 65-67 (GCS), 95-96 (DN), 123-124 (DI), N138, and R205.

The protein belongs to the class I-like SAM-binding methyltransferase superfamily. Cx-SAM synthase family. As to quaternary structure, homodimer.

It carries out the reaction prephenate + S-adenosyl-L-methionine = carboxy-S-adenosyl-L-methionine + 3-phenylpyruvate + H2O. Catalyzes the conversion of S-adenosyl-L-methionine (SAM) to carboxy-S-adenosyl-L-methionine (Cx-SAM). The protein is Carboxy-S-adenosyl-L-methionine synthase of Hahella chejuensis (strain KCTC 2396).